We begin with the raw amino-acid sequence, 525 residues long: Ubiquitin carboxyl-terminal hydrolase 22 (525 aa).

A UBP-type zinc finger spans residues 21 to 138; the sequence is PGCSHLGSFK…KEEQRKAWKM (118 aa). 12 residues coordinate Zn(2+): Cys23, His25, Cys63, Cys66, Cys76, Cys79, Cys84, His89, His93, His99, Cys112, and Cys115. An N6-acetyllysine modification is found at Lys129. Thr147 is modified (phosphothreonine). In terms of domain architecture, USP spans 176–520; sequence RGLINLGNTC…EGYLLFYHKQ (345 aa). The Nucleophile role is filled by Cys185. Ser237 is modified (phosphoserine). The active-site Proton acceptor is the His479.

Belongs to the peptidase C19 family. UBP8 subfamily. Component of some SAGA transcription coactivator-HAT complexes, at least composed of ATXN7, ATXN7L3, ENY2, GCN5L2, SUPT3H, TAF10, TRRAP and USP22. Within the SAGA complex, ATXN7L3, ENY2 and USP22 form a subcomplex required for histone deubiquitination. Interacts directly with ATXN7L3; leading to its recruitment to the SAGA complex. Interacts with ATXN7L3 and weakly with ATXN7L3B. Interacts with MED1. In terms of processing, phosphorylated in G2/M phase, but not in G1 phase by CDK1. Post-translationally, ubiquitinated and subsequently degraded in a CDC20-dependent manner. As to expression, highly expressed in brain and weakly in other organs.

It is found in the nucleus. It localises to the cytoplasm. The catalysed reaction is Thiol-dependent hydrolysis of ester, thioester, amide, peptide and isopeptide bonds formed by the C-terminal Gly of ubiquitin (a 76-residue protein attached to proteins as an intracellular targeting signal).. Deubiquitinase that plays a role in several cellular processes including transcriptional regulation, cell cycle progression or innate immunity. As part of the transcription regulatory histone acetylation (HAT) complex SAGA, catalyzes the deubiquitination of both histones H2A and H2B, thereby acting as a transcriptional coactivator. Recruited to specific gene promoters by activators such as MYC, where it is required for transcription. Facilitates cell-cycle progression by stabilizing CCNB1 and antagonizing its proteasome-mediated degradation in a cell cycle-specific manner. Modulates cell cycle progression and apoptosis also by antagonizing TP53 transcriptional activation through deacetylase SIRT1 stabilization. Plays multiple roles in immunity and inflammation. Participates in antiviral response by deubiquitinating the importin KPNA2, leading to IRF3 nuclear translocation and subsequent type I interferon production. Acts as a central regulator of type III IFN signaling by negatively regulating STING1 activation and ubiquitination. Inhibits NLRP3 inflammasome activation by promoting NLRP3 degradation through ATG5-dependent autophagy. Deubiquitinates CD274 to induce its stabilization and thereby participates in maintenance of immune tolerance to self. Controls necroptotic cell death by regulating RIPK3 phosphorylation and ubiquitination. During bacterial infection, promotes pro-inflammatory response by targeting TRAF6 and removing its 'Lys-48'-linked polyubiquitination. The sequence is that of Ubiquitin carboxyl-terminal hydrolase 22 (Usp22) from Mus musculus (Mouse).